The sequence spans 551 residues: Putative transport protein CGSHiGG_02670 (551 aa).

The next 5 helical transmembrane spans lie at 4–24 (IAIT…IGHW), 28–48 (GVGL…HFTN), 65–85 (FGLI…FFSS), 95–115 (AFAI…HKIA), and 157–177 (VSYA…MWLI). RCK C-terminal domains follow at residues 191-275 (RFNA…IIGH) and 277-360 (VDAP…VIGN). The next 6 helical transmembrane spans lie at 370 to 390 (MLPV…PFYI), 402 to 424 (AGGP…LYWF), 438 to 458 (IVLF…DTLV), 463 to 483 (LEWM…VGTI), 492 to 512 (YLTI…LAFA), and 529 to 549 (VYPL…VLLW).

Belongs to the AAE transporter (TC 2.A.81) family. YidE subfamily.

It localises to the cell membrane. The polypeptide is Putative transport protein CGSHiGG_02670 (Haemophilus influenzae (strain PittGG)).